Consider the following 154-residue polypeptide: Protein X (154 aa).

The segment at 68–117 (PCALRFTSARRMETTVNTHMILPKVLHKRTLGLPAMSTIDLEAYFKDCLF) is mitochondrial targeting sequence.

Belongs to the orthohepadnavirus protein X family. In terms of assembly, may form homodimer. May interact with host CEBPA, CFLAR, CREB1, DDB1, E4F1, HBXIP, HSPD1/HSP60, NFKBIA, POLR2E and SMAD4. Interacts with host SMC5-SMC6 complex and induces its degradation. Interacts with host TRPC4AP; leading to prevent ubiquitination of TRPC4AP. Interacts with host PLSCR1; this interaction promotes ubiquitination and degradation of HBx and impairs HBx-mediated cell proliferation. Post-translationally, a fraction may be phosphorylated in insect cells and HepG2 cells, a human hepatoblastoma cell line. Phosphorylated in vitro by host protein kinase C or mitogen-activated protein kinase. N-acetylated in insect cells.

It localises to the host cytoplasm. The protein localises to the host nucleus. It is found in the host mitochondrion. In terms of biological role, multifunctional protein that plays a role in silencing host antiviral defenses and promoting viral transcription. Does not seem to be essential for HBV infection. May be directly involved in development of cirrhosis and liver cancer (hepatocellular carcinoma). Most of cytosolic activities involve modulation of cytosolic calcium. The effect on apoptosis is controversial depending on the cell types in which the studies have been conducted. May induce apoptosis by localizing in mitochondria and causing loss of mitochondrial membrane potential. May also modulate apoptosis by binding host CFLAR, a key regulator of the death-inducing signaling complex (DISC). Promotes viral transcription by using the host E3 ubiquitin ligase DDB1 to target the SMC5-SMC6 complex to proteasomal degradation. This host complex would otherwise bind to viral episomal DNA, and prevents its transcription. Moderately stimulates transcription of many different viral and cellular transcription elements. Promoters and enhancers stimulated by HBx contain DNA binding sites for NF-kappa-B, AP-1, AP-2, c-EBP, ATF/CREB, or the calcium-activated factor NF-AT. In Hepatitis B virus genotype C subtype ayw (isolate Australia/AustRC/1992) (HBV-C), this protein is Protein X.